A 354-amino-acid polypeptide reads, in one-letter code: Membrane progestin receptor beta (354 aa).

Over 1–76 the chain is Cytoplasmic; it reads MTTAILERLS…FSLFQKHNEV (76 aa). The helical transmembrane segment at 77–97 threads the bilayer; it reads VNVWTHLLAALAVLLRFWAFV. Residues 98–111 lie on the Extracellular side of the membrane; sequence EAGALQWASPHTLP. A helical membrane pass occupies residues 112 to 132; that stretch reads LLLFILSSITYLTCSLLAHLL. Residues 133–173 lie on the Cytoplasmic side of the membrane; sequence QSKSELSHYTFYFVDYVGVSVYQYGSALAHFFYSSDQAWYE. Residues 174–194 form a helical membrane-spanning segment; it reads LFWIFFLPAAAFCGWLSCAGC. Topologically, residues 195–213 are extracellular; sequence CYAKYRYRRPYPVMRKICQ. The helical transmembrane segment at 214-234 threads the bilayer; the sequence is VVPAGLAFVLDISPVAHRVAL. Residues 235–243 are Cytoplasmic-facing; sequence CHLAGCQEQ. A helical transmembrane segment spans residues 244–264; it reads AAWYHTLQILFFLVSAYFFSC. Residues 265-283 lie on the Extracellular side of the membrane; sequence PVPEKYFPGSCDIVGHGHQ. The chain crosses the membrane as a helical span at residues 284 to 304; it reads IFHAFLSVCTLSQLEAILLDY. Over 305-315 the chain is Cytoplasmic; it reads QGRHEIFLQRH. The chain crosses the membrane as a helical span at residues 316–336; the sequence is GPLSVYSACLSFFVLAACSAA. Over 337–354 the chain is Extracellular; that stretch reads TATLLRHKVKDRLIKKDS.

This sequence belongs to the ADIPOR family. Expressed in brain and testis.

It localises to the cell membrane. Functionally, plasma membrane progesterone (P4) receptor coupled to G proteins. Seems to act through a G(i) mediated pathway. May be involved in oocyte maturation. Also binds dehydroepiandrosterone (DHEA), pregnanolone, pregnenolone and allopregnanolone. The chain is Membrane progestin receptor beta from Mus musculus (Mouse).